The primary structure comprises 316 residues: tRNA dimethylallyltransferase (316 aa).

Residue 27–34 (GATATGKT) participates in ATP binding. 29 to 34 (TATGKT) contributes to the substrate binding site. Positions 52–55 (DSRQ) are interaction with substrate tRNA.

The protein belongs to the IPP transferase family. In terms of assembly, monomer. Requires Mg(2+) as cofactor.

It carries out the reaction adenosine(37) in tRNA + dimethylallyl diphosphate = N(6)-dimethylallyladenosine(37) in tRNA + diphosphate. Functionally, catalyzes the transfer of a dimethylallyl group onto the adenine at position 37 in tRNAs that read codons beginning with uridine, leading to the formation of N6-(dimethylallyl)adenosine (i(6)A). This Treponema pallidum (strain Nichols) protein is tRNA dimethylallyltransferase.